The sequence spans 74 residues: Small ribosomal subunit protein eS28 (74 aa).

This sequence belongs to the eukaryotic ribosomal protein eS28 family.

The protein is Small ribosomal subunit protein eS28 of Halorubrum lacusprofundi (strain ATCC 49239 / DSM 5036 / JCM 8891 / ACAM 34).